A 644-amino-acid chain; its full sequence is Exoribonuclease 2 (644 aa).

One can recognise an RNB domain in the interval 189-516 (REDLTALNFV…NHRLLKAMIT (328 aa)). One can recognise an S1 motif domain in the interval 561–643 (DTRFTAEIID…ETRNVIARPV (83 aa)).

It belongs to the RNR ribonuclease family. RNase II subfamily.

It localises to the cytoplasm. It carries out the reaction Exonucleolytic cleavage in the 3'- to 5'-direction to yield nucleoside 5'-phosphates.. Involved in mRNA degradation. Hydrolyzes single-stranded polyribonucleotides processively in the 3' to 5' direction. The sequence is that of Exoribonuclease 2 from Yersinia pseudotuberculosis serotype IB (strain PB1/+).